Here is a 124-residue protein sequence, read N- to C-terminus: Large ribosomal subunit protein bL12 (124 aa).

Belongs to the bacterial ribosomal protein bL12 family. In terms of assembly, homodimer. Part of the ribosomal stalk of the 50S ribosomal subunit. Forms a multimeric L10(L12)X complex, where L10 forms an elongated spine to which 2 to 4 L12 dimers bind in a sequential fashion. Binds GTP-bound translation factors.

Forms part of the ribosomal stalk which helps the ribosome interact with GTP-bound translation factors. Is thus essential for accurate translation. In Burkholderia lata (strain ATCC 17760 / DSM 23089 / LMG 22485 / NCIMB 9086 / R18194 / 383), this protein is Large ribosomal subunit protein bL12.